The sequence spans 154 residues: Leghemoglobin-1 (154 aa).

Residues 3–151 enclose the Globin domain; the sequence is VLTDVQVALV…LAIIIKKEMK (149 aa). Serine 46 lines the heme b pocket. Serine 46 is subject to Phosphoserine. Histidine 64 serves as a coordination point for O2. 3 residues coordinate heme b: lysine 67, histidine 98, and lysine 101. Position 139 is a nitrated tyrosine (tyrosine 139).

Belongs to the plant globin family. In terms of assembly, monomer. Nitrated in effective nodules and particularly in hypoxic conditions; this mechanism may play a protective role in the symbiosis by buffering toxic peroxynitrite NO(2)(-). Nitration level decrease during nodule senescence. In terms of processing, phosphorylation at Ser-46 disrupts the molecular environment of its porphyrin ring oxygen binding pocket, thus leading to a reduced oxygen consumption and to the delivery of oxygen O(2) to symbiosomes. Accumulates in developing root nodules and present in roots, especially in the upper part. Detected in leaves at low levels.

The protein localises to the cytoplasm. The protein resides in the cytosol. Its subcellular location is the nucleus. Functionally, leghemoglobin that reversibly binds oxygen O(2) through a pentacoordinated heme iron. In root nodules, facilitates the diffusion of oxygen to the bacteroids while preventing the bacterial nitrogenase from being inactivated by buffering dioxygen, nitric oxide and carbon monoxide, and promoting the formation of reactive oxygen species (ROS, e.g. H(2)O(2)). This role is essential for symbiotic nitrogen fixation (SNF). This Lupinus luteus (European yellow lupine) protein is Leghemoglobin-1.